A 405-amino-acid polypeptide reads, in one-letter code: Adenylosuccinate synthetase (405 aa).

Residues 12 to 18 and 40 to 42 contribute to the GTP site; these read GDEGKGK and GHT. D13 acts as the Proton acceptor in catalysis. Mg(2+) contacts are provided by D13 and G40. Residues 13–16, 38–41, T121, R135, Q213, T228, and R297 each bind IMP; these read DEGK and NAGH. H41 serves as the catalytic Proton donor. Substrate is bound at residue 293–299; that stretch reads TTTGRAR. Residues R299, 325 to 327, and 390 to 392 each bind GTP; these read KMD and SAG.

Belongs to the adenylosuccinate synthetase family. Homodimer. Mg(2+) is required as a cofactor.

The protein localises to the cytoplasm. It carries out the reaction IMP + L-aspartate + GTP = N(6)-(1,2-dicarboxyethyl)-AMP + GDP + phosphate + 2 H(+). The protein operates within purine metabolism; AMP biosynthesis via de novo pathway; AMP from IMP: step 1/2. Plays an important role in the de novo pathway of purine nucleotide biosynthesis. Catalyzes the first committed step in the biosynthesis of AMP from IMP. The protein is Adenylosuccinate synthetase of Deinococcus deserti (strain DSM 17065 / CIP 109153 / LMG 22923 / VCD115).